We begin with the raw amino-acid sequence, 249 residues long: MELKFMDHVGTASPEEIARFTAMAEAWWDPQGKFKPLHRFNPVRLAFMRRHFAAHFGRDESLMRPFEGLTLLDVGSGGGLLSEPLARMGFAVTGIDAGDKNVAVARLHAEQTGVPVDYRVSTPEQLDPNEAFDVVLSMEVVEHVPDVSAFLGHATARLKPGGVFMGATLNRTAKAWALAVVGAEYVLGWLPKGTHDWNKFVRPSEFAAMLRDRGITVRQMAGMAFNPLSDTWRETDNLDVNYMLFGVKG.

Arg-44, Gly-75, Asp-96, and Met-138 together coordinate S-adenosyl-L-methionine.

This sequence belongs to the methyltransferase superfamily. UbiG/COQ3 family.

It catalyses the reaction a 3-demethylubiquinol + S-adenosyl-L-methionine = a ubiquinol + S-adenosyl-L-homocysteine + H(+). The enzyme catalyses a 3-(all-trans-polyprenyl)benzene-1,2-diol + S-adenosyl-L-methionine = a 2-methoxy-6-(all-trans-polyprenyl)phenol + S-adenosyl-L-homocysteine + H(+). It participates in cofactor biosynthesis; ubiquinone biosynthesis. In terms of biological role, O-methyltransferase that catalyzes the 2 O-methylation steps in the ubiquinone biosynthetic pathway. The chain is Ubiquinone biosynthesis O-methyltransferase from Paramagnetospirillum magneticum (strain ATCC 700264 / AMB-1) (Magnetospirillum magneticum).